We begin with the raw amino-acid sequence, 62 residues long: Sperm protamine P1 (62 aa).

The interval 1 to 62 (MARYRRRSRS…RYSRRGRRRY (62 aa)) is disordered.

It belongs to the protamine P1 family. Testis.

The protein localises to the nucleus. Its subcellular location is the chromosome. Functionally, protamines substitute for histones in the chromatin of sperm during the haploid phase of spermatogenesis. They compact sperm DNA into a highly condensed, stable and inactive complex. This is Sperm protamine P1 (PRM1) from Sarcophilus harrisii (Tasmanian devil).